Here is a 424-residue protein sequence, read N- to C-terminus: Serine hydroxymethyltransferase (424 aa).

Residues leucine 118 and 122–124 each bind (6S)-5,6,7,8-tetrahydrofolate; that span reads GHL. Lysine 227 is modified (N6-(pyridoxal phosphate)lysine). (6S)-5,6,7,8-tetrahydrofolate-binding positions include glutamate 243 and 351 to 353; that span reads SPF.

The protein belongs to the SHMT family. As to quaternary structure, homodimer. Requires pyridoxal 5'-phosphate as cofactor.

The protein resides in the cytoplasm. The enzyme catalyses (6R)-5,10-methylene-5,6,7,8-tetrahydrofolate + glycine + H2O = (6S)-5,6,7,8-tetrahydrofolate + L-serine. Its pathway is one-carbon metabolism; tetrahydrofolate interconversion. The protein operates within amino-acid biosynthesis; glycine biosynthesis; glycine from L-serine: step 1/1. In terms of biological role, catalyzes the reversible interconversion of serine and glycine with tetrahydrofolate (THF) serving as the one-carbon carrier. This reaction serves as the major source of one-carbon groups required for the biosynthesis of purines, thymidylate, methionine, and other important biomolecules. Also exhibits THF-independent aldolase activity toward beta-hydroxyamino acids, producing glycine and aldehydes, via a retro-aldol mechanism. This chain is Serine hydroxymethyltransferase, found in Thermosipho africanus (strain TCF52B).